A 389-amino-acid polypeptide reads, in one-letter code: Smad nuclear interacting protein 1 (389 aa).

Basic and acidic residues predominate over residues 1-10; that stretch reads MKAGKSERER. A disordered region spans residues 1-212; the sequence is MKAGKSERER…GNKNKEVPVK (212 aa). A Phosphoserine modification is found at Ser18. Lys28 participates in a covalent cross-link: Glycyl lysine isopeptide (Lys-Gly) (interchain with G-Cter in SUMO); alternate. A Glycyl lysine isopeptide (Lys-Gly) (interchain with G-Cter in SUMO1); alternate cross-link involves residue Lys28. Lys28 is covalently cross-linked (Glycyl lysine isopeptide (Lys-Gly) (interchain with G-Cter in SUMO2); alternate). Over residues 28–43 the composition is skewed to basic and acidic residues; that stretch reads KQERLSPEPVAHRRPD. Phosphoserine occurs at positions 33 and 48. Positions 54 to 72 are enriched in low complexity; the sequence is AESGSAGHRGSRARGASRS. A compositionally biased stretch (basic residues) spans 73–95; sequence PAKKKSKSSGRRSKSPRTKRSRS. Residue Ser95 is modified to Phosphoserine. Composition is skewed to basic and acidic residues over residues 103-138 and 147-163; these read VKQE…ERDR and RSSD…DRDS. Lys104 participates in a covalent cross-link: Glycyl lysine isopeptide (Lys-Gly) (interchain with G-Cter in SUMO2). Phosphoserine is present on Ser149. Positions 166-197 form a coiled coil; it reads LQAQEEERDFNNARRREHRQQNESAGAEAQEV. Lys214 participates in a covalent cross-link: Glycyl lysine isopeptide (Lys-Gly) (interchain with G-Cter in SUMO2). The FHA domain occupies 272-335; sequence YLLGRHRRIA…NGTFLNNKRI (64 aa). Over residues 363-373 the composition is skewed to basic and acidic residues; that stretch reads ESSDTSELDRK. Residues 363–389 form a disordered region; the sequence is ESSDTSELDRKEDEDEEEEEEMVSDSS. Acidic residues predominate over residues 374 to 389; sequence EDEDEEEEEEMVSDSS. Ser386 bears the Phosphoserine mark.

Component of activated spliceosome complexes. Component of the minor spliceosome, which splices U12-type introns. Binds SMAD4 and CREBBP/EP300. Binds the SMAD1/OAZ1/PSMB4 complex. Interacts with DROSHA and SMARCA4. Component of the SNARP complex which consists at least of SNIP1, SNW1, THRAP3, BCLAF1 and PNN. In terms of processing, degraded by the proteasome upon binding to the SMAD1/OAZ1/PSMB4 complex.

The protein resides in the nucleus. Required for pre-mRNA splicing as component of the spliceosome. As a component of the minor spliceosome, involved in the splicing of U12-type introns in pre-mRNAs. Down-regulates NF-kappa-B signaling by competing with RELA for CREBBP/EP300 binding. Involved in the microRNA (miRNA) biogenesis. May be involved in cyclin-D1/CCND1 mRNA stability through the SNARP complex which associates with both the 3'end of the CCND1 gene and its mRNA. This is Smad nuclear interacting protein 1 (Snip1) from Rattus norvegicus (Rat).